A 364-amino-acid polypeptide reads, in one-letter code: MAIDPYRHLLRPLLFSGLQADPELLHQQFLSLCGWLNQDRSLCTWLRQQLQQWYALSDPRLERQVWGLRFPNPIGLAAGFDKNGVARSVWSAFGFGFAELGTVTWHPQPGNPRPRLFRLGSDRAVINRMGFNNAGAEAMAASLERSPPASIPIGINLGKSKITPLAAAKEDYLASFRRLHPLGDYFVINVSSPNTPGLRDLQAKEQLAPILETLQSANHPRKPLLLKIAPDLSWEQIAAILDLVQAYELAGIVATNTTVAREGLKSQTIPQTGRSPAEEAGGLSGAPLRQRATAVIRFIHEQTQGTLPIIGVGGIFTPEDVIEKLAAGATLVQLYTGWIYQGPSLLRELLKGLLAAADQETPEK.

FMN contacts are provided by residues 78–82 (AGFDK) and Thr102. Position 82 (Lys82) interacts with substrate. 127-131 (NRMGF) is a binding site for substrate. FMN-binding residues include Asn156 and Asn189. Residue Asn189 coordinates substrate. Ser192 functions as the Nucleophile in the catalytic mechanism. Residue Asn194 participates in substrate binding. FMN is bound by residues Lys227 and Thr255. A substrate-binding site is contributed by 256–257 (NT). Residues Gly285, Gly314, and 335–336 (YT) contribute to the FMN site.

This sequence belongs to the dihydroorotate dehydrogenase family. Type 2 subfamily. Monomer. Requires FMN as cofactor.

It localises to the cell membrane. It catalyses the reaction (S)-dihydroorotate + a quinone = orotate + a quinol. It participates in pyrimidine metabolism; UMP biosynthesis via de novo pathway; orotate from (S)-dihydroorotate (quinone route): step 1/1. Functionally, catalyzes the conversion of dihydroorotate to orotate with quinone as electron acceptor. The polypeptide is Dihydroorotate dehydrogenase (quinone) (Thermosynechococcus vestitus (strain NIES-2133 / IAM M-273 / BP-1)).